Reading from the N-terminus, the 479-residue chain is UPF0164 protein TP_0865 (479 aa).

The first 49 residues, 1–49 (MVRMRRRRACSSGGACGCAAVRGARSFLSVRVLGMRIGMSALCLAPLFA), serve as a signal peptide directing secretion.

It belongs to the UPF0164 family.

The sequence is that of UPF0164 protein TP_0865 from Treponema pallidum (strain Nichols).